The chain runs to 79 residues: Small ribosomal subunit protein bS18 (79 aa).

Belongs to the bacterial ribosomal protein bS18 family. In terms of assembly, part of the 30S ribosomal subunit. Forms a tight heterodimer with protein bS6.

Functionally, binds as a heterodimer with protein bS6 to the central domain of the 16S rRNA, where it helps stabilize the platform of the 30S subunit. The protein is Small ribosomal subunit protein bS18 of Streptococcus pneumoniae serotype 19F (strain G54).